Reading from the N-terminus, the 583-residue chain is Asparagine synthetase, root [glutamine-hydrolyzing] (583 aa).

The For GATase activity role is filled by C2. The Glutamine amidotransferase type-2 domain occupies 2-185; it reads CGILAVLGCS…PGHLYSSKDS (184 aa). Residues 50–54, 75–77, and D98 contribute to the L-glutamine site; these read RLAIV and NGE. ATP-binding positions include L231, V267, and 341 to 342; that span reads SG. The 280-residue stretch at 237 to 516 folds into the Asparagine synthetase domain; sequence DSSLVASITS…PQNSARLTVP (280 aa).

In terms of tissue distribution, roots.

It carries out the reaction L-aspartate + L-glutamine + ATP + H2O = L-asparagine + L-glutamate + AMP + diphosphate + H(+). It functions in the pathway amino-acid biosynthesis; L-asparagine biosynthesis; L-asparagine from L-aspartate (L-Gln route): step 1/1. This is Asparagine synthetase, root [glutamine-hydrolyzing] (AS2) from Pisum sativum (Garden pea).